A 194-amino-acid polypeptide reads, in one-letter code: UPF0215 protein TV0037 (194 aa).

The protein belongs to the UPF0215 family.

The protein is UPF0215 protein TV0037 of Thermoplasma volcanium (strain ATCC 51530 / DSM 4299 / JCM 9571 / NBRC 15438 / GSS1).